We begin with the raw amino-acid sequence, 154 residues long: MHIDFHDETNSVSEDYIDLIQRLLDFAAQKEGVTSEAELSVNFVDNKEIQVLNRNYRQKDTPTDVISFAMQESNEDEMEIIGADGPLVLGDIVISVDKAKEQSIEYDHSLERELGFLAVHGFLHLLGYDHMKEEDEKKMFSRQEEILGEFGVER.

3 residues coordinate Zn(2+): His120, His124, and His130.

The protein belongs to the endoribonuclease YbeY family. It depends on Zn(2+) as a cofactor.

The protein resides in the cytoplasm. Single strand-specific metallo-endoribonuclease involved in late-stage 70S ribosome quality control and in maturation of the 3' terminus of the 16S rRNA. This chain is Endoribonuclease YbeY, found in Oceanobacillus iheyensis (strain DSM 14371 / CIP 107618 / JCM 11309 / KCTC 3954 / HTE831).